The chain runs to 397 residues: Methyltransferase/ribosomally synthesized type I borosin cyclic peptide precursor mroMa1 (397 aa).

Residues 1 to 246 (MALKKPGSLT…TTSTFYVPPR (246 aa)) form a methyltransferase domain region. Active-site residues include arginine 70, tyrosine 74, and tyrosine 96. S-adenosyl-L-methionine is bound by residues tyrosine 96, histidine 98, valine 101, alanine 128, glutamine 170, glycine 208, serine 239, and threonine 240. Residues 247 to 365 (TPAPIDPKAV…GPIFVVMRQL (119 aa)) form a clasp domain region. A precursor leader region spans residues 366–388 (PSAIASGQEPSQEEIARADDATA). Residues isoleucine 391 and isoleucine 392 each carry the N-methylisoleucine modification. Tyrosine 393 is modified (N-methyltyrosine). Isoleucine 394 is modified (N-methylisoleucine). Valine 395 carries the post-translational modification N-methylvaline.

The protein in the N-terminal section; belongs to the precorrin methyltransferase family. In terms of assembly, homodimer. MroMA automethylates at Ile-391, Ile-392, Tyr-393, Ile-394 and Val-395 before being processed by the a prolyloligopeptidase which likely forms a peptidyl ester upon removal of the follower propeptide, which then undergoes macrocyclization with the N-terminus of the modified core peptide. Peptide backbone alpha-N-methylations change the physicochemical properties of amide bonds to provide structural constraints and other favorable characteristics including biological membrane permeability to peptides.

It participates in secondary metabolite biosynthesis. Its function is as follows. Fusion protein of the methyltransferase mroM1 and a type I borosin core peptide; part of the gene cluster that mediates the biosynthesis of a type I borosin, a highly methylated cyclic peptide with potent biological activities. Type I borosins derive from the C-terminus of the fusion protein, and it is the same protein that methylates its own C-terminus using S-adenosyl methionine (SAM). The C-terminus is subsequently cleaved off and macrocyclized by a prolyloligopeptidase to give the final product. The polypeptide is Methyltransferase/ribosomally synthesized type I borosin cyclic peptide precursor mroMa1 (Mycena rosella (Pink bonnet)).